The primary structure comprises 160 residues: Inorganic pyrophosphatase (160 aa).

Substrate contacts are provided by Lys16, Arg28, and Tyr40. 3 residues coordinate Mg(2+): Asp50, Asp55, and Asp87. Residue Tyr126 coordinates substrate.

It belongs to the PPase family. Homohexamer. Mg(2+) serves as cofactor.

Its subcellular location is the cytoplasm. It carries out the reaction diphosphate + H2O = 2 phosphate + H(+). Functionally, catalyzes the hydrolysis of inorganic pyrophosphate (PPi) forming two phosphate ions. This chain is Inorganic pyrophosphatase, found in Nanoarchaeum equitans (strain Kin4-M).